Consider the following 89-residue polypeptide: Small ribosomal subunit protein uS19 (89 aa).

Belongs to the universal ribosomal protein uS19 family.

Protein S19 forms a complex with S13 that binds strongly to the 16S ribosomal RNA. The protein is Small ribosomal subunit protein uS19 of Rhodopirellula baltica (strain DSM 10527 / NCIMB 13988 / SH1).